Consider the following 833-residue polypeptide: DNA ligase (833 aa).

NAD(+) contacts are provided by residues 35–39 (DVEYD), 84–85 (SL), and glutamate 115. Lysine 117 functions as the N6-AMP-lysine intermediate in the catalytic mechanism. Arginine 138, glutamate 175, lysine 292, and lysine 316 together coordinate NAD(+). Residues cysteine 410, cysteine 413, cysteine 428, and cysteine 434 each contribute to the Zn(2+) site. The 84-residue stretch at 750-833 (VQAGPLDGQT…AFLSEHGQAV (84 aa)) folds into the BRCT domain.

It belongs to the NAD-dependent DNA ligase family. LigA subfamily. Mg(2+) serves as cofactor. Requires Mn(2+) as cofactor.

It carries out the reaction NAD(+) + (deoxyribonucleotide)n-3'-hydroxyl + 5'-phospho-(deoxyribonucleotide)m = (deoxyribonucleotide)n+m + AMP + beta-nicotinamide D-nucleotide.. In terms of biological role, DNA ligase that catalyzes the formation of phosphodiester linkages between 5'-phosphoryl and 3'-hydroxyl groups in double-stranded DNA using NAD as a coenzyme and as the energy source for the reaction. It is essential for DNA replication and repair of damaged DNA. This Xanthomonas campestris pv. campestris (strain 8004) protein is DNA ligase.